The chain runs to 45 residues: Cytochrome b559 subunit beta (45 aa).

Residues 20–36 form a helical membrane-spanning segment; that stretch reads WLALHTLGIPTVFFLGA. His-24 lines the heme pocket.

Belongs to the PsbE/PsbF family. As to quaternary structure, heterodimer of an alpha subunit and a beta subunit. PSII is composed of 1 copy each of membrane proteins PsbA, PsbB, PsbC, PsbD, PsbE, PsbF, PsbH, PsbI, PsbJ, PsbK, PsbL, PsbM, PsbT, PsbX, PsbY, PsbZ, Psb30/Ycf12, peripheral proteins PsbO, CyanoQ (PsbQ), PsbU, PsbV and a large number of cofactors. It forms dimeric complexes. It depends on heme b as a cofactor.

It is found in the cellular thylakoid membrane. Functionally, this b-type cytochrome is tightly associated with the reaction center of photosystem II (PSII). PSII is a light-driven water:plastoquinone oxidoreductase that uses light energy to abstract electrons from H(2)O, generating O(2) and a proton gradient subsequently used for ATP formation. It consists of a core antenna complex that captures photons, and an electron transfer chain that converts photonic excitation into a charge separation. This is Cytochrome b559 subunit beta from Synechococcus sp. (strain CC9902).